A 224-amino-acid polypeptide reads, in one-letter code: UPF0758 protein Pmen_4376 (224 aa).

An MPN domain is found at 102–224 (ALESPQAVRD…PLSMAELGWM (123 aa)). Residues His173, His175, and Asp186 each contribute to the Zn(2+) site. A JAMM motif motif is present at residues 173-186 (HNHPSGVCEPSQAD).

It belongs to the UPF0758 family.

This is UPF0758 protein Pmen_4376 from Ectopseudomonas mendocina (strain ymp) (Pseudomonas mendocina).